The chain runs to 372 residues: Probable O-methyltransferase 2 (372 aa).

S-adenosyl-L-methionine is bound by residues Gly216, Asp259, and Lys273. Catalysis depends on His277, which acts as the Proton acceptor.

This sequence belongs to the class I-like SAM-binding methyltransferase superfamily. Cation-independent O-methyltransferase family. COMT subfamily. Homodimer. In terms of tissue distribution, expressed predominantly in root hairs.

O-methyltransferase of unknown substrate specificity. Not active on resorcinol, orcinol, guaiacol, eugenol, ferulic acid, p-coumaric acid, catechol, caffeic acid or monomethyl ethers of resorcinol or orcinol. The chain is Probable O-methyltransferase 2 (OMT2) from Sorghum bicolor (Sorghum).